Here is a 355-residue protein sequence, read N- to C-terminus: MTTSLDTVETFGPTSYDDDMGLLCEKADVGALIAQFVPPLYSLVFMVGLLGNVVVVMILIKYRRLRIMTNIYLLNLAISDLLFLFTLPFWIHYVRERNWVFSHGMCKVLSGFYHTGLYSEIFFIILLTIDRYLAIVHAVFALRARTVTFGVVTSIVTWGLAVLAALPEFIFYGTEELFPETLCSAIYPQDTVYSWRHFHTLRMTILCLALPLLVMAICYTGIIKTLLRCPSKKKYKAIRLIFVIMAVFFIFWTPYNVAILISTYQSILFGPDCERSKHLDLFVLVTEVIAYSHCWVNPVIYAFVGERFRKYLRHFFHRHVLMHPGKYIPFLPSEKLERTSSVSPSTAEPELSIVF.

Topologically, residues 1–34 (MTTSLDTVETFGPTSYDDDMGLLCEKADVGALIA) are extracellular. Residues 35–62 (QFVPPLYSLVFMVGLLGNVVVVMILIKY) traverse the membrane as a helical segment. The Cytoplasmic portion of the chain corresponds to 63-72 (RRLRIMTNIY). The helical transmembrane segment at 73 to 93 (LLNLAISDLLFLFTLPFWIHY) threads the bilayer. The Extracellular segment spans residues 94-107 (VRERNWVFSHGMCK). The cysteines at positions 106 and 183 are disulfide-linked. The chain crosses the membrane as a helical span at residues 108-129 (VLSGFYHTGLYSEIFFIILLTI). At 130–146 (DRYLAIVHAVFALRART) the chain is on the cytoplasmic side. The helical transmembrane segment at 147–171 (VTFGVVTSIVTWGLAVLAALPEFIF) threads the bilayer. At 172-203 (YGTEELFPETLCSAIYPQDTVYSWRHFHTLRM) the chain is on the extracellular side. The helical transmembrane segment at 204-223 (TILCLALPLLVMAICYTGII) threads the bilayer. Residues 224–239 (KTLLRCPSKKKYKAIR) lie on the Cytoplasmic side of the membrane. The helical transmembrane segment at 240–264 (LIFVIMAVFFIFWTPYNVAILISTY) threads the bilayer. Over 265–281 (QSILFGPDCERSKHLDL) the chain is Extracellular. Residues 282 to 305 (FVLVTEVIAYSHCWVNPVIYAFVG) form a helical membrane-spanning segment. The Cytoplasmic segment spans residues 306 to 355 (ERFRKYLRHFFHRHVLMHPGKYIPFLPSEKLERTSSVSPSTAEPELSIVF).

Belongs to the G-protein coupled receptor 1 family.

The protein localises to the cell membrane. Functionally, receptor for C-C type chemokine. Binds and responds to a variety of chemokines, including CCL11, CCL26, CCL7, CCL13, RANTES(CCL5) and CCL15. Subsequently transduces a signal by increasing the intracellular calcium ions level. In addition acts as a possible functional receptor for NARS1. The chain is C-C chemokine receptor type 3 (CCR3) from Macaca fascicularis (Crab-eating macaque).